A 209-amino-acid chain; its full sequence is Uracil phosphoribosyltransferase (209 aa).

Residues arginine 79, arginine 104, and 131-139 each bind 5-phospho-alpha-D-ribose 1-diphosphate; that span reads DPMLATGGS. Uracil-binding positions include isoleucine 194 and 199-201; that span reads GDA. A 5-phospho-alpha-D-ribose 1-diphosphate-binding site is contributed by aspartate 200.

This sequence belongs to the UPRTase family. It depends on Mg(2+) as a cofactor.

It carries out the reaction UMP + diphosphate = 5-phospho-alpha-D-ribose 1-diphosphate + uracil. It functions in the pathway pyrimidine metabolism; UMP biosynthesis via salvage pathway; UMP from uracil: step 1/1. With respect to regulation, allosterically activated by GTP. In terms of biological role, catalyzes the conversion of uracil and 5-phospho-alpha-D-ribose 1-diphosphate (PRPP) to UMP and diphosphate. The sequence is that of Uracil phosphoribosyltransferase from Brevibacillus brevis (strain 47 / JCM 6285 / NBRC 100599).